The sequence spans 307 residues: Salivary glue protein Sgs-3 (307 aa).

The N-terminal stretch at 1 to 23 is a signal peptide; the sequence is MKLTIATALASILLIGSANVANC. The disordered stretch occupies residues 56–257; sequence APPTQQSTTQ…PTTTKPTTPK (202 aa).

In terms of processing, O-glycosylated by Pgnat9 in salivary glands. Specifically expressed in the salivary gland.

The protein resides in the secreted. This chain is Salivary glue protein Sgs-3, found in Drosophila melanogaster (Fruit fly).